Reading from the N-terminus, the 509-residue chain is Putative ATP-dependent RNA helicase QP509L (509 aa).

The 153-residue stretch at 110–262 folds into the Helicase ATP-binding domain; sequence KKLLSPYGRF…KIILHHLGQP (153 aa). 123–130 provides a ligand contact to ATP; that stretch reads LNTGLGKT. A DEAH box motif is present at residues 215–218; it reads DEAH.

It belongs to the DEAD box helicase family. DEAH subfamily.

The catalysed reaction is ATP + H2O = ADP + phosphate + H(+). This chain is Putative ATP-dependent RNA helicase QP509L, found in Ornithodoros (relapsing fever ticks).